A 202-amino-acid chain; its full sequence is Large ribosomal subunit protein bL25 (202 aa).

It belongs to the bacterial ribosomal protein bL25 family. CTC subfamily. As to quaternary structure, part of the 50S ribosomal subunit; part of the 5S rRNA/L5/L18/L25 subcomplex. Contacts the 5S rRNA. Binds to the 5S rRNA independently of L5 and L18.

In terms of biological role, this is one of the proteins that binds to the 5S RNA in the ribosome where it forms part of the central protuberance. In Paramagnetospirillum magneticum (strain ATCC 700264 / AMB-1) (Magnetospirillum magneticum), this protein is Large ribosomal subunit protein bL25.